We begin with the raw amino-acid sequence, 699 residues long: tRNA 5-methylaminomethyl-2-thiouridine biosynthesis bifunctional protein MnmC (699 aa).

The tRNA (mnm(5)s(2)U34)-methyltransferase stretch occupies residues 1–260 (MTAKPHISCQ…ERKLLRQQAN (260 aa)). Positions 282 to 699 (IGGGLASAHL…LRKLLKGKAL (418 aa)) are FAD-dependent cmnm(5)s(2)U34 oxidoreductase.

In the N-terminal section; belongs to the methyltransferase superfamily. tRNA (mnm(5)s(2)U34)-methyltransferase family. It in the C-terminal section; belongs to the DAO family. Requires FAD as cofactor.

It is found in the cytoplasm. It catalyses the reaction 5-aminomethyl-2-thiouridine(34) in tRNA + S-adenosyl-L-methionine = 5-methylaminomethyl-2-thiouridine(34) in tRNA + S-adenosyl-L-homocysteine + H(+). Functionally, catalyzes the last two steps in the biosynthesis of 5-methylaminomethyl-2-thiouridine (mnm(5)s(2)U) at the wobble position (U34) in tRNA. Catalyzes the FAD-dependent demodification of cmnm(5)s(2)U34 to nm(5)s(2)U34, followed by the transfer of a methyl group from S-adenosyl-L-methionine to nm(5)s(2)U34, to form mnm(5)s(2)U34. The sequence is that of tRNA 5-methylaminomethyl-2-thiouridine biosynthesis bifunctional protein MnmC from Shewanella oneidensis (strain ATCC 700550 / JCM 31522 / CIP 106686 / LMG 19005 / NCIMB 14063 / MR-1).